A 946-amino-acid polypeptide reads, in one-letter code: Bifunctional glutamine synthetase adenylyltransferase/adenylyl-removing enzyme (946 aa).

Residues 1–441 (MSLLNDAALH…EFNWVIGDDE (441 aa)) form an adenylyl removase region. Residues 448-946 (DQALSELWAL…VIKIWEKFLD (499 aa)) form an adenylyl transferase region.

It belongs to the GlnE family. It depends on Mg(2+) as a cofactor.

It carries out the reaction [glutamine synthetase]-O(4)-(5'-adenylyl)-L-tyrosine + phosphate = [glutamine synthetase]-L-tyrosine + ADP. The enzyme catalyses [glutamine synthetase]-L-tyrosine + ATP = [glutamine synthetase]-O(4)-(5'-adenylyl)-L-tyrosine + diphosphate. Its function is as follows. Involved in the regulation of glutamine synthetase GlnA, a key enzyme in the process to assimilate ammonia. When cellular nitrogen levels are high, the C-terminal adenylyl transferase (AT) inactivates GlnA by covalent transfer of an adenylyl group from ATP to specific tyrosine residue of GlnA, thus reducing its activity. Conversely, when nitrogen levels are low, the N-terminal adenylyl removase (AR) activates GlnA by removing the adenylyl group by phosphorolysis, increasing its activity. The regulatory region of GlnE binds the signal transduction protein PII (GlnB) which indicates the nitrogen status of the cell. This chain is Bifunctional glutamine synthetase adenylyltransferase/adenylyl-removing enzyme, found in Psychromonas ingrahamii (strain DSM 17664 / CCUG 51855 / 37).